We begin with the raw amino-acid sequence, 229 residues long: Orotate phosphoribosyltransferase (229 aa).

Residues Arg-107, Lys-108, Lys-111, His-113, and 133-141 (EDLTTAGGS) each bind 5-phospho-alpha-D-ribose 1-diphosphate. Orotate is bound at residue Thr-137.

This sequence belongs to the purine/pyrimidine phosphoribosyltransferase family. PyrE subfamily. In terms of assembly, homodimer. The cofactor is Mg(2+).

It catalyses the reaction orotidine 5'-phosphate + diphosphate = orotate + 5-phospho-alpha-D-ribose 1-diphosphate. It functions in the pathway pyrimidine metabolism; UMP biosynthesis via de novo pathway; UMP from orotate: step 1/2. Its function is as follows. Catalyzes the transfer of a ribosyl phosphate group from 5-phosphoribose 1-diphosphate to orotate, leading to the formation of orotidine monophosphate (OMP). The chain is Orotate phosphoribosyltransferase from Rhizobium johnstonii (strain DSM 114642 / LMG 32736 / 3841) (Rhizobium leguminosarum bv. viciae).